We begin with the raw amino-acid sequence, 178 residues long: Adenine phosphoribosyltransferase (178 aa).

This sequence belongs to the purine/pyrimidine phosphoribosyltransferase family. Homodimer.

Its subcellular location is the cytoplasm. It catalyses the reaction AMP + diphosphate = 5-phospho-alpha-D-ribose 1-diphosphate + adenine. It participates in purine metabolism; AMP biosynthesis via salvage pathway; AMP from adenine: step 1/1. Functionally, catalyzes a salvage reaction resulting in the formation of AMP, that is energically less costly than de novo synthesis. This chain is Adenine phosphoribosyltransferase, found in Pseudoalteromonas atlantica (strain T6c / ATCC BAA-1087).